Reading from the N-terminus, the 264-residue chain is Thymidylate synthase (264 aa).

Position 21 (Arg21) interacts with dUMP. His51 contacts (6R)-5,10-methylene-5,6,7,8-tetrahydrofolate. A dUMP-binding site is contributed by 126 to 127 (RR). Residue Cys146 is the Nucleophile of the active site. DUMP is bound by residues 166 to 169 (RSAD), Asn177, and 207 to 209 (HLY). (6R)-5,10-methylene-5,6,7,8-tetrahydrofolate is bound at residue Asp169. Ala263 contributes to the (6R)-5,10-methylene-5,6,7,8-tetrahydrofolate binding site.

This sequence belongs to the thymidylate synthase family. Bacterial-type ThyA subfamily. As to quaternary structure, homodimer.

Its subcellular location is the cytoplasm. It carries out the reaction dUMP + (6R)-5,10-methylene-5,6,7,8-tetrahydrofolate = 7,8-dihydrofolate + dTMP. The protein operates within pyrimidine metabolism; dTTP biosynthesis. Catalyzes the reductive methylation of 2'-deoxyuridine-5'-monophosphate (dUMP) to 2'-deoxythymidine-5'-monophosphate (dTMP) while utilizing 5,10-methylenetetrahydrofolate (mTHF) as the methyl donor and reductant in the reaction, yielding dihydrofolate (DHF) as a by-product. This enzymatic reaction provides an intracellular de novo source of dTMP, an essential precursor for DNA biosynthesis. The sequence is that of Thymidylate synthase from Bartonella bacilliformis (strain ATCC 35685 / KC583 / Herrer 020/F12,63).